The sequence spans 71 residues: Small ribosomal subunit protein bS21 (71 aa).

It belongs to the bacterial ribosomal protein bS21 family.

This is Small ribosomal subunit protein bS21 from Shewanella piezotolerans (strain WP3 / JCM 13877).